The primary structure comprises 458 residues: Phosphoglucosamine mutase (458 aa).

Serine 100 (phosphoserine intermediate) is an active-site residue. Mg(2+) is bound by residues serine 100, aspartate 239, aspartate 241, and aspartate 243. At serine 100 the chain carries Phosphoserine.

This sequence belongs to the phosphohexose mutase family. Mg(2+) serves as cofactor. Activated by phosphorylation.

It catalyses the reaction alpha-D-glucosamine 1-phosphate = D-glucosamine 6-phosphate. In terms of biological role, catalyzes the conversion of glucosamine-6-phosphate to glucosamine-1-phosphate. This Dictyoglomus thermophilum (strain ATCC 35947 / DSM 3960 / H-6-12) protein is Phosphoglucosamine mutase.